Reading from the N-terminus, the 468-residue chain is Putative FBD-associated F-box protein At5g22720 (468 aa).

One can recognise an F-box domain in the interval 22–68 (EDLISQLPDSLITQILFYLQTKKAVTTSVLSKRWRSLWLSTPGLVLI). Positions 375–433 (ELRLSFVPRCLLSSLEFVEIKGCSRSNMERVKYVGEPIETKLARYFVENSTILKKLVLP) constitute an FBD domain.

In Arabidopsis thaliana (Mouse-ear cress), this protein is Putative FBD-associated F-box protein At5g22720.